We begin with the raw amino-acid sequence, 248 residues long: tRNA (guanine-N(1)-)-methyltransferase (248 aa).

Residues Gly113 and 133–138 contribute to the S-adenosyl-L-methionine site; that span reads IGDYVL. A disordered region spans residues 227–248; it reads RPAQTIRAKGESQKTPKNKTDG. The span at 234-248 shows a compositional bias: basic and acidic residues; sequence AKGESQKTPKNKTDG.

This sequence belongs to the RNA methyltransferase TrmD family. As to quaternary structure, homodimer.

The protein localises to the cytoplasm. It carries out the reaction guanosine(37) in tRNA + S-adenosyl-L-methionine = N(1)-methylguanosine(37) in tRNA + S-adenosyl-L-homocysteine + H(+). Functionally, specifically methylates guanosine-37 in various tRNAs. The protein is tRNA (guanine-N(1)-)-methyltransferase of Rhodopseudomonas palustris (strain TIE-1).